Reading from the N-terminus, the 131-residue chain is SPbeta prophage-derived UPF0715 membrane protein YopD (131 aa).

A run of 4 helical transmembrane segments spans residues 12-32 (VYTL…YLFV), 38-58 (AIAL…YLVF), 75-95 (LINF…FWFV), and 108-128 (FEYY…DSIF).

The protein belongs to the UPF0715 family.

It is found in the cell membrane. This is SPbeta prophage-derived UPF0715 membrane protein YopD (yopD) from Bacillus subtilis (strain 168).